The sequence spans 556 residues: Formate--tetrahydrofolate ligase (556 aa).

65-72 (TPAGEGKT) lines the ATP pocket.

It belongs to the formate--tetrahydrofolate ligase family.

The catalysed reaction is (6S)-5,6,7,8-tetrahydrofolate + formate + ATP = (6R)-10-formyltetrahydrofolate + ADP + phosphate. The protein operates within one-carbon metabolism; tetrahydrofolate interconversion. The sequence is that of Formate--tetrahydrofolate ligase from Carboxydothermus hydrogenoformans (strain ATCC BAA-161 / DSM 6008 / Z-2901).